The sequence spans 715 residues: Forkhead box protein P2 (715 aa).

Polar residues predominate over residues 1 to 28 (MMQESATETISNSSMNQNGMSTLSSQLD). Disordered stretches follow at residues 1-46 (MMQE…EVST) and 281-339 (DNGI…TGAS). The span at 292 to 305 (TTNNSSSTTSSNTS) shows a compositional bias: low complexity. The segment covering 326–337 (ARRDSSSHEETG) has biased composition (basic and acidic residues). The C2H2-type zinc finger occupies 346–371 (GVCKWPGCESICEDFGQFLKHLNNEH). The tract at residues 388–409 (VQQLEIQLSKERERLQAMMTHL) is leucine-zipper. A CTBP1-binding region spans residues 422–426 (PLNLV). Residues 438 to 459 (TSPQSLPQTPTTPTAPVTPITQ) are compositionally biased toward low complexity. Residues 438 to 465 (TSPQSLPQTPTTPTAPVTPITQGPSVIT) form a disordered region. The segment at residues 504–594 (RPPFTYATLI…SQKITGSPTL (91 aa)) is a DNA-binding region (fork-head). 2 disordered regions span residues 649–668 (LDHI…QPHI) and 678–715 (VIAE…EDLE). Positions 699 to 715 (LEDDREIEEEPLSEDLE) are enriched in acidic residues.

As to quaternary structure, forms homodimers and heterodimers with FOXP1 and FOXP4. Dimerization is required for DNA-binding. Interacts with CTBP1. Interacts with FOXP1. Isoform 1 and isoform 3 interact with TBR1. Interacts with ZMYM2. Isoform 1 and isoform 6 are expressed in adult and fetal brain, caudate nucleus and lung.

It is found in the nucleus. Functionally, transcriptional repressor that may play a role in the specification and differentiation of lung epithelium. May also play a role in developing neural, gastrointestinal and cardiovascular tissues. Can act with CTBP1 to synergistically repress transcription but CTPBP1 is not essential. Plays a role in synapse formation by regulating SRPX2 levels. Involved in neural mechanisms mediating the development of speech and language. The sequence is that of Forkhead box protein P2 (FOXP2) from Homo sapiens (Human).